The chain runs to 277 residues: Shikimate dehydrogenase (NADP(+)) (277 aa).

Shikimate contacts are provided by residues 17–19 (SRS) and Thr-64. Lys-68 functions as the Proton acceptor in the catalytic mechanism. The shikimate site is built by Asn-88 and Asp-103. Residues 128–132 (GAGGS) and Leu-217 contribute to the NADP(+) site. Tyr-219 serves as a coordination point for shikimate. Gly-240 is a binding site for NADP(+).

Belongs to the shikimate dehydrogenase family. As to quaternary structure, homodimer.

It carries out the reaction shikimate + NADP(+) = 3-dehydroshikimate + NADPH + H(+). Its pathway is metabolic intermediate biosynthesis; chorismate biosynthesis; chorismate from D-erythrose 4-phosphate and phosphoenolpyruvate: step 4/7. Involved in the biosynthesis of the chorismate, which leads to the biosynthesis of aromatic amino acids. Catalyzes the reversible NADPH linked reduction of 3-dehydroshikimate (DHSA) to yield shikimate (SA). This chain is Shikimate dehydrogenase (NADP(+)), found in Afipia carboxidovorans (strain ATCC 49405 / DSM 1227 / KCTC 32145 / OM5) (Oligotropha carboxidovorans).